The sequence spans 290 residues: Type II secretion system protein C (290 aa).

The Cytoplasmic segment spans residues 1–28; sequence MTLPFRDDLLSSLLARCKTVPLSRFSQP. The chain crosses the membrane as a helical span at residues 29–46; sequence LFWLLLLLLAHQCAGLTW. Topologically, residues 47 to 290 are periplasmic; it reads RLLDLGSQQS…LYDVYVGLSE (244 aa).

This sequence belongs to the GSP C family.

The protein resides in the cell inner membrane. Functionally, involved in a type II secretion system (T2SS, formerly general secretion pathway, GSP) for the export of proteins. The polypeptide is Type II secretion system protein C (exeC) (Aeromonas salmonicida).